Here is a 130-residue protein sequence, read N- to C-terminus: MTDPIADFLTRIRNANMVYQEKVEVPASRVKRALAEILKNEGYIKNYEYIEDNKQGILRLYLKYGPNKEKVITGLKRISCPGLRVYAKKGEIPRVLGGLGVAVISTSKGILTDKEARRQGVGGEVICYIW.

Belongs to the universal ribosomal protein uS8 family. Part of the 30S ribosomal subunit. Contacts proteins S5 and S12.

In terms of biological role, one of the primary rRNA binding proteins, it binds directly to 16S rRNA central domain where it helps coordinate assembly of the platform of the 30S subunit. The sequence is that of Small ribosomal subunit protein uS8 from Moorella thermoacetica (strain ATCC 39073 / JCM 9320).